Reading from the N-terminus, the 507-residue chain is Cell cycle serine/threonine-protein kinase hsk1 (507 aa).

Position 22 is a phosphoserine (Ser22). A Protein kinase domain is found at 68–433 (YRLIEKIGEG…AEEALDHDFL (366 aa)). Residues 74–82 (IGEGTFSSV) and Lys129 each bind ATP. The active-site Proton acceptor is the Asp216. A Phosphothreonine modification is found at Thr291. Positions 475–507 (FKEQEETDEPTSLSKRKRSIDEILPNDALQDGA) are disordered. Ser493 bears the Phosphoserine mark.

The protein belongs to the protein kinase superfamily. Ser/Thr protein kinase family. CDC7 subfamily. As to quaternary structure, heterodimer with the regulatory subunit him1/dfp1. May form homooligomeric complexes. Interacts with mcm10. Autophosphorylated. Phosphorylated by cds1 in vitro.

It is found in the nucleus. The catalysed reaction is L-seryl-[protein] + ATP = O-phospho-L-seryl-[protein] + ADP + H(+). The enzyme catalyses L-threonyl-[protein] + ATP = O-phospho-L-threonyl-[protein] + ADP + H(+). With respect to regulation, phosphorylation of exogenous substrates activated by Dfp1. Functionally, required for G1/S transition. Plays a role in DNA replication checkpoint signaling through regulating rad3 and cds1. Involved in the maintenance of mitotic chromosome structures during S phase through regulating the function of rad21. Required for initiation of mitotic DNA replication through phosphorylating mcm2/cdc19. Required for genome integrity. This chain is Cell cycle serine/threonine-protein kinase hsk1 (hsk1), found in Schizosaccharomyces pombe (strain 972 / ATCC 24843) (Fission yeast).